The sequence spans 340 residues: Ferredoxin--NADP reductase (340 aa).

FAD contacts are provided by Asp33, Gln41, Tyr46, Ala86, Phe120, Asp286, and Thr327.

Belongs to the ferredoxin--NADP reductase type 2 family. In terms of assembly, homodimer. The cofactor is FAD.

It catalyses the reaction 2 reduced [2Fe-2S]-[ferredoxin] + NADP(+) + H(+) = 2 oxidized [2Fe-2S]-[ferredoxin] + NADPH. The polypeptide is Ferredoxin--NADP reductase (Rickettsia rickettsii (strain Sheila Smith)).